The sequence spans 345 residues: MSHQTGIRANEQLAKVLGKAKNGKLRVVKVSIENEQLSCSATADVKKDWERDYDKLLGPLLEETVPCYILYRLDAKIPLGHSWLLISWIPDTASIRQKMVYASTKATLKTEFGSAYITEELHATTLEETTLEGYRKHKRDFAAPAPLTTREEELKELRKTEVHTEISTNTRHQTLGGISCPLTDATVAAVQDLVRGNYDYLQFRIDLEEERIHVSHAAQVELSALPKQVPEDHARYHLFLFRHTHEGDYQESYVFVYSMPGYTCSVRERMMYSSCKAPFLEQLAALGVDVVKKLEIDNGNELTEAYLLDELHPKKILHRPAFAKPKGPPNRGAKRLTRPSNEDQV.

2 ADF-H domains span residues 4–139 (QTGI…KHKR) and 177–312 (GISC…DELH). Residues 320–345 (PAFAKPKGPPNRGAKRLTRPSNEDQV) form a disordered region.

The protein belongs to the actin-binding proteins ADF family. Twinfilin subfamily. As to quaternary structure, interacts with G-actin; ADP-actin form.

It is found in the cytoplasm. The protein localises to the cytoskeleton. It localises to the cell cortex. Its function is as follows. Actin-binding protein involved in motile and morphological processes. Inhibits actin polymerization, likely by sequestering G-actin. The polypeptide is Twinfilin (twf) (Drosophila pseudoobscura pseudoobscura (Fruit fly)).